A 410-amino-acid polypeptide reads, in one-letter code: Peptidase T (410 aa).

H78 contacts Zn(2+). Residue D80 is part of the active site. Zn(2+) is bound at residue D140. E174 (proton acceptor) is an active-site residue. 3 residues coordinate Zn(2+): E175, D197, and H379.

Belongs to the peptidase M20B family. Zn(2+) serves as cofactor.

It localises to the cytoplasm. The enzyme catalyses Release of the N-terminal residue from a tripeptide.. Cleaves the N-terminal amino acid of tripeptides. The sequence is that of Peptidase T from Vibrio atlanticus (strain LGP32) (Vibrio splendidus (strain Mel32)).